Here is a 191-residue protein sequence, read N- to C-terminus: GTP cyclohydrolase 1 (191 aa).

Residues Cys80, His83, and Cys151 each coordinate Zn(2+).

Belongs to the GTP cyclohydrolase I family. In terms of assembly, toroid-shaped homodecamer, composed of two pentamers of five dimers.

The enzyme catalyses GTP + H2O = 7,8-dihydroneopterin 3'-triphosphate + formate + H(+). The protein operates within cofactor biosynthesis; 7,8-dihydroneopterin triphosphate biosynthesis; 7,8-dihydroneopterin triphosphate from GTP: step 1/1. The polypeptide is GTP cyclohydrolase 1 (Nitrosospira multiformis (strain ATCC 25196 / NCIMB 11849 / C 71)).